We begin with the raw amino-acid sequence, 367 residues long: Dual-specificity RNA methyltransferase RlmN (367 aa).

Glu-91 acts as the Proton acceptor in catalysis. The 236-residue stretch at Gly-102 to Asp-337 folds into the Radical SAM core domain. Residues Cys-109 and Cys-342 are joined by a disulfide bond. [4Fe-4S] cluster is bound by residues Cys-116, Cys-120, and Cys-123. Residues Gly-169 to Glu-170, Ser-201, Ser-223 to His-225, and Asn-299 each bind S-adenosyl-L-methionine. Cys-342 serves as the catalytic S-methylcysteine intermediate.

It belongs to the radical SAM superfamily. RlmN family. It depends on [4Fe-4S] cluster as a cofactor.

Its subcellular location is the cytoplasm. It catalyses the reaction adenosine(2503) in 23S rRNA + 2 reduced [2Fe-2S]-[ferredoxin] + 2 S-adenosyl-L-methionine = 2-methyladenosine(2503) in 23S rRNA + 5'-deoxyadenosine + L-methionine + 2 oxidized [2Fe-2S]-[ferredoxin] + S-adenosyl-L-homocysteine. The enzyme catalyses adenosine(37) in tRNA + 2 reduced [2Fe-2S]-[ferredoxin] + 2 S-adenosyl-L-methionine = 2-methyladenosine(37) in tRNA + 5'-deoxyadenosine + L-methionine + 2 oxidized [2Fe-2S]-[ferredoxin] + S-adenosyl-L-homocysteine. Its function is as follows. Specifically methylates position 2 of adenine 2503 in 23S rRNA and position 2 of adenine 37 in tRNAs. m2A2503 modification seems to play a crucial role in the proofreading step occurring at the peptidyl transferase center and thus would serve to optimize ribosomal fidelity. The sequence is that of Dual-specificity RNA methyltransferase RlmN from Nitratidesulfovibrio vulgaris (strain DSM 19637 / Miyazaki F) (Desulfovibrio vulgaris).